Reading from the N-terminus, the 268-residue chain is Nickel import ATP-binding protein NikE (268 aa).

The region spanning 4–252 is the ABC transporter domain; sequence LNISGLSHHY…SSDAGRVLQN (249 aa). 45 to 52 serves as a coordination point for ATP; the sequence is GRSGCGKS.

It belongs to the ABC transporter superfamily. Nickel importer (TC 3.A.1.5.3) family. In terms of assembly, the complex is composed of two ATP-binding proteins (NikD and NikE), two transmembrane proteins (NikB and NikC) and a solute-binding protein (NikA).

The protein localises to the cell inner membrane. The catalysed reaction is Ni(2+)(out) + ATP + H2O = Ni(2+)(in) + ADP + phosphate + H(+). Functionally, part of the ABC transporter complex NikABCDE involved in nickel import. Responsible for energy coupling to the transport system. The sequence is that of Nickel import ATP-binding protein NikE from Escherichia coli (strain K12).